Reading from the N-terminus, the 68-residue chain is Large ribosomal subunit protein bL31 (68 aa).

Residues C16, C18, C36, and C39 each contribute to the Zn(2+) site.

Belongs to the bacterial ribosomal protein bL31 family. Type A subfamily. In terms of assembly, part of the 50S ribosomal subunit. Zn(2+) is required as a cofactor.

Its function is as follows. Binds the 23S rRNA. This is Large ribosomal subunit protein bL31 from Dictyoglomus turgidum (strain DSM 6724 / Z-1310).